Consider the following 209-residue polypeptide: Small ribosomal subunit protein uS5 (209 aa).

The segment covering 1 to 11 (MTQPNTQTTPN) has biased composition (polar residues). Positions 1–55 (MTQPNTQTTPNDVPAAAEGQQEQQQQQRRGGGRERRGGGRRGDRRGQERDSEWQE) are disordered. The segment covering 18–28 (EGQQEQQQQQR) has biased composition (low complexity). Over residues 31-55 (GGRERRGGGRRGDRRGQERDSEWQE) the composition is skewed to basic and acidic residues. One can recognise an S5 DRBM domain in the interval 53 to 116 (WQERVVQIRR…ADGKKHLVKV (64 aa)).

It belongs to the universal ribosomal protein uS5 family. Part of the 30S ribosomal subunit. Contacts proteins S4 and S8.

Its function is as follows. With S4 and S12 plays an important role in translational accuracy. Functionally, located at the back of the 30S subunit body where it stabilizes the conformation of the head with respect to the body. The protein is Small ribosomal subunit protein uS5 of Prochlorococcus marinus (strain MIT 9313).